Here is a 336-residue protein sequence, read N- to C-terminus: UDP-N-acetylmuramoylpentapeptide-lysine N(6)-alanyltransferase (336 aa).

Substrate is bound by residues 37-40, Tyr104, Arg212, Tyr216, and Tyr257; that span reads KNNW.

It belongs to the FemABX family.

It carries out the reaction UDP-N-acetyl-alpha-D-muramoyl-L-alanyl-gamma-D-glutamyl-L-lysyl-D-alanyl-D-alanine + L-alanyl-tRNA(Ala) = UDP-N-acetyl-alpha-D-muramoyl-L-alanyl-gamma-D-glutamyl-N(6)-(L-alanyl)-L-lysyl-D-alanyl-D-alanine + tRNA(Ala) + H(+). Its function is as follows. Involved in the synthesis of the bacterial cell wall. Catalyzes the addition of alanine into the interchain peptide bridge of peptidoglycan precursor using aminoacyl-tRNA(Ala) as amino acid donor. This alanine is added to the epsilon-amino group of the L-lysine of the peptidoglycan UDP-N-acetyl-alpha-D-muramoyl-L-alanyl-D-glutamyl-L-lysyl-D-alanyl-D-alanine, in a ribosome-independent mechanism. Specific for UDP-N-acetyl-muramoyl-pentapeptide. Has no activity toward UDP-N-acetyl-muramoyl-tetrapeptide or UDP-N-acetyl-muramoyl-tripeptide. Also acts on L-seryl-tRNA(Ser). This chain is UDP-N-acetylmuramoylpentapeptide-lysine N(6)-alanyltransferase, found in Weissella viridescens (Lactobacillus viridescens).